Consider the following 792-residue polypeptide: MVLGLRSKIIPLPDHKLGNIKLGSVTNAICHRPCRVRCSHSTASSMEEAKERIRETFGKIELSPSSYDTAWVAMVPSRYSMNQPCFPQCLDWILENQREDGSWGLNPSHPLLVKDSLSSTLASLLALRKWRIGDNQVQRGLGFIETHGWAVDNKDQISPLGFEIIFPCMINYAEKLNLDLPLDPNLVNMMLCERELTIERALKNEFEGNMANVEYFAEGLGELCHWKEMMLRQRHNGSLFDSPATTAAALIYHQYDEKCFGYLNSILKLHDNWVPTICPTKIHSNLFLVDALQNLGVDRYFKTEVKRVLDEIYRLWLEKNEEIFSDVAHCAMAFRLLRMNNYEVSSEELEGFVDQEHFFTTSSGKLMNHVAILELHRASQVAIHERKDHILDKISTWTRNFMEQKLLDKHIPDRSKKEMEFAMRKFYGTFDRVETRRYIESYKMDSFKILKAAYRSSGINNIDLLKFSEHDFNLCQTRHKEELQQMKRWFTDCKLEQVGLSQQYLYTSYFIIAAILFEPEYADARLAYAKYAIIITAVDDFFDCFICKEELQNIIELVERWEGYSTVGFRSERVRIFFLALYKMVEEIAAKAETKQGRCVKDHLINLWIDMLKCMLVELDLWKIKSTTPSIEEYLSVACVTIGVPCFVLTSLYLLGPKLSKDVIESSEVSALCNCTAAVARLINDIHSYKREQAESSTNMVSILITQSQGTISEEEAIRQIKEMMESKRRELLGMVLQNKESQLPQVCKDLFWTTINAAYSIHTHGDGYRFPEEFKNHINDVIYKPLNQYSP.

The N-terminal 37 residues, 1-37 (MVLGLRSKIIPLPDHKLGNIKLGSVTNAICHRPCRVR), are a transit peptide targeting the chloroplast. Positions 539, 543, 684, and 692 each coordinate Mg(2+). Positions 539–543 (DDFFD) match the DDXXD motif motif.

The protein belongs to the terpene synthase family. It depends on Mg(2+) as a cofactor. In terms of tissue distribution, expressed specifically in trichomes.

It is found in the plastid. The protein resides in the chloroplast. The catalysed reaction is 8-hydroxycopalyl diphosphate = cis-abienol + diphosphate. The protein operates within secondary metabolite biosynthesis; terpenoid biosynthesis. Its function is as follows. Involved in the biosynthesis of cis-abienol, a labdane diterpene that can be used as synthesis precursor of ambergris substitution fragance products. The protein is Cis-abienol synthase, chloroplastic of Nicotiana tabacum (Common tobacco).